The sequence spans 242 residues: Sugar fermentation stimulation protein homolog (242 aa).

Belongs to the SfsA family.

This chain is Sugar fermentation stimulation protein homolog, found in Nitratidesulfovibrio vulgaris (strain DP4) (Desulfovibrio vulgaris).